Consider the following 423-residue polypeptide: F-box/LRR-repeat protein 2 (423 aa).

One can recognise an F-box domain in the interval 9–55 (GRINKKLPKELLLRIFSFLDIVTLCRCAQISKAWNILALDGSNWQRI). LRR repeat units follow at residues 61–87 (QTDV…SLRG), 88–113 (CIGV…NLNG), 114–139 (CTKI…DLTS), 140–165 (CVSI…NLSW), 166–191 (CDQI…LLRG), 192–217 (CTQL…NLQS), 218–243 (CSRI…CLSG), 244–269 (CSNL…EAAR), 270–295 (CSHL…DLEE), 296–321 (CILI…SLSH), 322–350 (CELI…ELDN), 351–375 (CLLI…ELYD), and 376–401 (CQQV…AYFA). The segment at 80 to 90 (LRKLSLRGCIG) is interaction with Calmodulin. Lys201 is covalently cross-linked (Glycyl lysine isopeptide (Lys-Gly) (interchain with G-Cter in ubiquitin)). Thr404 carries the post-translational modification Phosphothreonine. A lipid anchor (S-geranylgeranyl cysteine) is attached at Cys420. Positions 420–423 (CVIL) match the CAAX motif motif.

As to quaternary structure, part of the SCF (SKP1-CUL1-F-box) E3 ubiquitin-protein ligase complex SCF(FBXL2) composed of CUL1, SKP1, RBX1 and FBXL2. Interacts with calmodulin; may antagonize substrate ubiquitination by SCF(FBXL2). May interact with PIK3R1. Interacts with PTPN13. In terms of processing, phosphorylated by GSK-beta (GSK3B), promoting recognition by FBXO3, leading to its ubiquitination by the SCF(FBXO3) complex. Ubiquitinated at Lys-201 by the SCF(FBXO3) complex in response to lipopolysaccharide (LPS), leading to its degradation by the proteasome.

It is found in the membrane. It functions in the pathway protein modification; protein ubiquitination. Functionally, calcium-activated substrate recognition component of the SCF (SKP1-cullin-F-box protein) E3 ubiquitin-protein ligase complex, SCF(FBXL2), which mediates the ubiquitination and subsequent proteasomal degradation of target proteins. Unlike many F-box proteins, FBXL2 does not seem to target phosphodegron within its substrates but rather calmodulin-binding motifs and is thereby antagonized by calmodulin. This is the case for the cyclins CCND2 and CCND3 which polyubiquitination and subsequent degradation are inhibited by calmodulin. Through CCND2 and CCND3 degradation induces cell-cycle arrest in G(0). SCF(FBXL2) also mediates PIK3R2 ubiquitination and proteasomal degradation thereby regulating phosphatidylinositol 3-kinase signaling and autophagy. PCYT1A monoubiquitination by SCF(FBXL2) and subsequent degradation regulates synthesis of phosphatidylcholine, which is utilized for formation of membranes and of pulmonary surfactant. The SCF(FBXL2) complex acts as a regulator of inflammation by mediating ubiquitination and degradation of TRAF proteins (TRAF1, TRAF2, TRAF3, TRAF4, TRAF5 and TRAF6). The SCF(FBXL2) complex acts as a negative regulator of the NLRP3 inflammasome by mediating ubiquitination and degradation of NLRP3. The protein is F-box/LRR-repeat protein 2 of Pongo abelii (Sumatran orangutan).